Here is a 146-residue protein sequence, read N- to C-terminus: DNA-directed RNA polymerases II, IV and V subunit 8B (146 aa).

Belongs to the eukaryotic RPB8 RNA polymerase subunit family. As to quaternary structure, component of the RNA polymerase II, IV and V complexes. Associates with the mediator complex.

It is found in the nucleus. DNA-dependent RNA polymerase catalyzes the transcription of DNA into RNA using the four ribonucleoside triphosphates as substrates. Component of RNA polymerase II which synthesizes mRNA precursors and many functional non-coding RNAs. Pol II is the central component of the basal RNA polymerase II transcription machinery. It is composed of mobile elements that move relative to each other. Component of RNA polymerases IV and V which mediate short-interfering RNAs (siRNA) accumulation and subsequent RNA-directed DNA methylation-dependent (RdDM) transcriptional gene silencing (TGS) of endogenous repeated sequences, including transposable elements. This Arabidopsis thaliana (Mouse-ear cress) protein is DNA-directed RNA polymerases II, IV and V subunit 8B (NRPB8B).